A 318-amino-acid polypeptide reads, in one-letter code: Glycine--tRNA ligase alpha subunit (318 aa).

It belongs to the class-II aminoacyl-tRNA synthetase family. As to quaternary structure, tetramer of two alpha and two beta subunits.

The protein resides in the cytoplasm. The enzyme catalyses tRNA(Gly) + glycine + ATP = glycyl-tRNA(Gly) + AMP + diphosphate. The chain is Glycine--tRNA ligase alpha subunit from Chelativorans sp. (strain BNC1).